The chain runs to 257 residues: uncharacterized protein (257 aa).

6 helical membrane passes run Val23 to Leu43, Phe79 to Ala99, Thr131 to Val151, Phe158 to Met178, Ala199 to Met219, and His221 to Ile241.

This sequence belongs to the TerC family.

It is found in the cell membrane. This is an uncharacterized protein from Bacillus subtilis (strain 168).